Consider the following 190-residue polypeptide: Protein GrpE (190 aa).

The protein belongs to the GrpE family. Homodimer.

Its subcellular location is the cytoplasm. Functionally, participates actively in the response to hyperosmotic and heat shock by preventing the aggregation of stress-denatured proteins, in association with DnaK and GrpE. It is the nucleotide exchange factor for DnaK and may function as a thermosensor. Unfolded proteins bind initially to DnaJ; upon interaction with the DnaJ-bound protein, DnaK hydrolyzes its bound ATP, resulting in the formation of a stable complex. GrpE releases ADP from DnaK; ATP binding to DnaK triggers the release of the substrate protein, thus completing the reaction cycle. Several rounds of ATP-dependent interactions between DnaJ, DnaK and GrpE are required for fully efficient folding. The sequence is that of Protein GrpE from Streptococcus agalactiae serotype III (strain NEM316).